Reading from the N-terminus, the 341-residue chain is Phosphoribosylaminoimidazole-succinocarboxamide synthase, chloroplastic (341 aa).

Belongs to the SAICAR synthetase family.

It is found in the plastid. The protein resides in the chloroplast. It carries out the reaction 5-amino-1-(5-phospho-D-ribosyl)imidazole-4-carboxylate + L-aspartate + ATP = (2S)-2-[5-amino-1-(5-phospho-beta-D-ribosyl)imidazole-4-carboxamido]succinate + ADP + phosphate + 2 H(+). It functions in the pathway purine metabolism; IMP biosynthesis via de novo pathway; 5-amino-1-(5-phospho-D-ribosyl)imidazole-4-carboxamide from 5-amino-1-(5-phospho-D-ribosyl)imidazole-4-carboxylate: step 1/2. The polypeptide is Phosphoribosylaminoimidazole-succinocarboxamide synthase, chloroplastic (PUR7) (Vigna aconitifolia (Moth bean)).